The sequence spans 305 residues: Mitogen-activated protein kinase kinase 10 (305 aa).

Serine 34 is subject to Phosphoserine. Residues 48 to 302 form the Protein kinase domain; it reads LEKLSVLGQG…VEELLRHSFV (255 aa). ATP-binding positions include 54 to 62 and lysine 77; that span reads LGQGSGGTV. Aspartate 165 functions as the Proton acceptor in the catalytic mechanism. Position 200 is a phosphothreonine (threonine 200).

The protein belongs to the protein kinase superfamily. STE Ser/Thr protein kinase family. MAP kinase kinase subfamily. Interacts with P.syringae type III effector HopF2.

The catalysed reaction is L-seryl-[protein] + ATP = O-phospho-L-seryl-[protein] + ADP + H(+). It carries out the reaction L-threonyl-[protein] + ATP = O-phospho-L-threonyl-[protein] + ADP + H(+). The enzyme catalyses L-tyrosyl-[protein] + ATP = O-phospho-L-tyrosyl-[protein] + ADP + H(+). The protein is Mitogen-activated protein kinase kinase 10 (MKK10) of Arabidopsis thaliana (Mouse-ear cress).